The primary structure comprises 792 residues: Probable phosphoketolase (792 aa).

This sequence belongs to the XFP family. It depends on thiamine diphosphate as a cofactor.

This Brucella melitensis biotype 1 (strain ATCC 23456 / CCUG 17765 / NCTC 10094 / 16M) protein is Probable phosphoketolase.